The chain runs to 365 residues: Alanine racemase (365 aa).

Lys32 (proton acceptor; specific for D-alanine) is an active-site residue. Position 32 is an N6-(pyridoxal phosphate)lysine (Lys32). Residue Arg128 coordinates substrate. Tyr257 acts as the Proton acceptor; specific for L-alanine in catalysis. Substrate is bound at residue Met305.

It belongs to the alanine racemase family. It depends on pyridoxal 5'-phosphate as a cofactor.

The catalysed reaction is L-alanine = D-alanine. It functions in the pathway amino-acid biosynthesis; D-alanine biosynthesis; D-alanine from L-alanine: step 1/1. Functionally, catalyzes the interconversion of L-alanine and D-alanine. May also act on other amino acids. In Francisella tularensis subsp. novicida (strain U112), this protein is Alanine racemase (alr).